Reading from the N-terminus, the 440-residue chain is Methionine aminopeptidase 2-2 (440 aa).

Residues 1-102 (MAAQVPTEAL…KGQEEEYRDE (102 aa)) are disordered. The span at 36-46 (DSDDSDEEGEE) shows a compositional bias: acidic residues. Over residues 56-70 (AKKKKKNKKKKKKKS) the composition is skewed to basic residues. His-194 is a binding site for substrate. Residues Asp-214, Asp-225, and His-294 each contribute to the a divalent metal cation site. His-302 is a substrate binding site. A divalent metal cation is bound by residues Glu-327 and Glu-421.

Belongs to the peptidase M24A family. Methionine aminopeptidase eukaryotic type 2 subfamily. The cofactor is Co(2+). Zn(2+) is required as a cofactor. It depends on Mn(2+) as a cofactor. Requires Fe(2+) as cofactor.

It is found in the cytoplasm. The enzyme catalyses Release of N-terminal amino acids, preferentially methionine, from peptides and arylamides.. In terms of biological role, cotranslationally removes the N-terminal methionine from nascent proteins. The N-terminal methionine is often cleaved when the second residue in the primary sequence is small and uncharged (Met-Ala-, Cys, Gly, Pro, Ser, Thr, or Val). In Colletotrichum graminicola (strain M1.001 / M2 / FGSC 10212) (Maize anthracnose fungus), this protein is Methionine aminopeptidase 2-2.